Here is a 443-residue protein sequence, read N- to C-terminus: COP9 signalosome complex subunit 2 (443 aa).

Residues 1 to 275 (MSDMEDDFMC…DESGSPRRTT (275 aa)) are mediates interaction with NIF3L1. Residues 254–416 (AHTDFFEAFK…QLLELDHQKR (163 aa)) form the PCI domain.

Belongs to the CSN2 family. In terms of assembly, component of the CSN complex, composed of COPS1/GPS1, COPS2, COPS3, COPS4, COPS5, COPS6, COPS7 (COPS7A or COPS7B), COPS8 and COPS9 isoform 1. In the complex, it probably interacts directly with COPS1, COPS4, COPS5, COPS6 and COPS7 (COPS7A or COPS7B). Specifically interacts with the ligand binding domain of the thyroid receptor (TR). Does not require the presence of thyroid hormone for its interaction. Interacts with CUL1 and CUL2. Interacts with IRF8/ICSBP1 and with nuclear receptors NR2F1 and NR0B1. Interacts with NIF3L1. In terms of processing, phosphorylated by CK2 and PKD kinases.

The protein resides in the cytoplasm. It localises to the nucleus. Functionally, essential component of the COP9 signalosome complex (CSN), a complex involved in various cellular and developmental processes. The CSN complex is an essential regulator of the ubiquitin (Ubl) conjugation pathway by mediating the deneddylation of the cullin subunits of SCF-type E3 ligase complexes, leading to decrease the Ubl ligase activity of SCF-type complexes such as SCF, CSA or DDB2. The complex is also involved in phosphorylation of p53/TP53, c-jun/JUN, IkappaBalpha/NFKBIA, ITPK1 and IRF8/ICSBP, possibly via its association with CK2 and PKD kinases. CSN-dependent phosphorylation of TP53 and JUN promotes and protects degradation by the Ubl system, respectively. Involved in early stage of neuronal differentiation via its interaction with NIF3L1. The chain is COP9 signalosome complex subunit 2 (COPS2) from Homo sapiens (Human).